The chain runs to 102 residues: Small ribosomal subunit protein uS10 (102 aa).

The protein belongs to the universal ribosomal protein uS10 family. Part of the 30S ribosomal subunit.

Functionally, involved in the binding of tRNA to the ribosomes. The protein is Small ribosomal subunit protein uS10 of Shouchella clausii (strain KSM-K16) (Alkalihalobacillus clausii).